The sequence spans 244 residues: HTH-type transcriptional regulator Cmr (244 aa).

41-160 (GSAPLHRDDV…RRWLSSVAQR (120 aa)) serves as a coordination point for a nucleoside 3',5'-cyclic phosphate. Positions 174-237 (RPLPAQVAQL…YAVIEITDQH (64 aa)) constitute an HTH crp-type domain. A DNA-binding region (H-T-H motif) is located at residues 197–216 (QRTLAAMLGAQRPSINKILK).

Its function is as follows. Positively regulates the expression of at least groEL2. This chain is HTH-type transcriptional regulator Cmr (cmr), found in Mycobacterium tuberculosis (strain CDC 1551 / Oshkosh).